The sequence spans 69 residues: MGKLGENVPLLIDKAVDFMASSQAFREYLKKLPPRNAIPSGIPDESVPLYLQRLEYYRQLYRPKQVEEK.

This is an uncharacterized protein from Escherichia coli O6:H1 (strain CFT073 / ATCC 700928 / UPEC).